The following is a 182-amino-acid chain: IQ domain-containing protein F1 (182 aa).

2 stretches are compositionally biased toward basic and acidic residues: residues 1–10 and 31–43; these read MGEEQQKPEE and ETEK…KQEL. Positions 1 to 43 are disordered; it reads MGEEQQKPEELNAPTDDAPQEKQQPADLSSETEKAKSKKKQEL. IQ domains lie at 45–74 and 101–130; these read EKDQ…SAWI and EQWA…AVRT.

As to quaternary structure, interacts with calmodulin. In terms of tissue distribution, specifically expressed in testes and mature spermatozoa (at protein level).

It is found in the cytoplasmic vesicle. It localises to the secretory vesicle. The protein localises to the acrosome. In terms of biological role, involved in sperm capacitation and acrosome reaction. This is IQ domain-containing protein F1 from Mus musculus (Mouse).